Here is a 355-residue protein sequence, read N- to C-terminus: Guanine nucleotide-binding protein G(i) subunit alpha-2 (355 aa).

Gly2 is lipidated: N-myristoyl glycine. The S-palmitoyl cysteine moiety is linked to residue Cys3. The region spanning 32 to 355 (REVKLLLLGA…KNNLKDCGLF (324 aa)) is the G-alpha domain. Residues 35–48 (KLLLLGAGESGKST) form a G1 motif region. GTP contacts are provided by residues 40 to 47 (GAGESGKS), 176 to 182 (LRTRVKT), 201 to 205 (DVGGQ), 270 to 273 (NKKD), and Ala327. The Mg(2+) site is built by Ser47 and Thr182. Residues 174 to 182 (DVLRTRVKT) are G2 motif. Residues 197 to 206 (FKMFDVGGQR) form a G3 motif region. A G4 motif region spans residues 266 to 273 (ILFLNKKD). The G5 motif stretch occupies residues 325-330 (TCATDT).

The protein belongs to the G-alpha family. G(i/o/t/z) subfamily. As to quaternary structure, g proteins are composed of 3 units; alpha, beta and gamma. The alpha chain contains the guanine nucleotide binding site. In this context, interacts with GNB2. Interacts with UNC5B. Interacts with GPSM1. Interacts with RGS12 and RGS14. Interacts (inactive GDP-bound form) with NUCB1 (via GBA motif); the interaction leads to activation of GNAI3. Interacts (inactive GDP-bound form) with CCDC88C/DAPLE (via GBA motif). Interacts (inactive GDP-bound form) with CCDC8A/GIV (via GBA motif).

The protein resides in the cytoplasm. It is found in the cell membrane. The protein localises to the cytoskeleton. Its subcellular location is the microtubule organizing center. It localises to the centrosome. The protein resides in the membrane. In terms of biological role, guanine nucleotide-binding proteins (G proteins) are involved as modulators or transducers in various transmembrane signaling systems. The G(i) proteins are involved in hormonal regulation of adenylate cyclase: they inhibit the cyclase in response to beta-adrenergic stimuli. May play a role in cell division. The protein is Guanine nucleotide-binding protein G(i) subunit alpha-2 (Gnai2) of Rattus norvegicus (Rat).